Reading from the N-terminus, the 467-residue chain is Chlorophenol O-methyltransferase (467 aa).

The tract at residues 1–41 is disordered; it reads MAELRAPSSLSTERNGSASNTDVDKQKLNHLYQNGNKKTGS. Composition is skewed to polar residues over residues 8-21 and 31-41; these read SSLS…ASNT and LYQNGNKKTGS. Asp320 contributes to the S-adenosyl-L-methionine binding site. His368 serves as the catalytic Proton acceptor.

It belongs to the class I-like SAM-binding methyltransferase superfamily. Cation-independent O-methyltransferase family.

It catalyses the reaction 2,4,6-trichlorophenol + S-adenosyl-L-methionine = 2,4,6-trichloroanisole + S-adenosyl-L-homocysteine. Its activity is regulated as follows. S-adenosyl-L-homocysteine acts as a competitive inhibitor. Also strongly inhibited by low concentrations of several metal ions, such as Cu(2+), Hg(2+), Zn(2+), and Ag(+), and to a lesser extent by p-chloromercuribenzoic acid, but it is not significantly affected by several thiols or other thiol reagents. Its function is as follows. Chlorophenol O-methyltransferase that methylates chlorophenols into chloroanisoles which are thought to be responsible for cork taint of wines. The only single chlorophenol (CP) methylated is 2-CP; neither 3-CP nor 4-CP are effective substrates. Within the dichlorophenols (DCPs), 2,4-DCP supports the highest rate of O-methylation, and the activity decreases in the following order: 2,3-DCP, 2,5-DCP, 2,6-DCP, and 3,4-DCP. Within the trichlorophenol (TCP) group, the maximal activity is observed with 2,3,4-TCP, whereas there is increasingly reduced activity with 2,4,5-TCP, 2,4,6-TCP, and 2,3,6-TCP. The only tetrachlorophenol (TeCP) that is methylated is 2,3,4,5-TeCP, since no activity can be detected with 2,3,4,6-TeCP and 2,3,5,6-TeCP. Is also able to methylate other halogenated phenols containing fluoro or bromo substituents, whereas other hydroxylated compounds, such as hydroxylated benzoic acids, hydroxybenzaldehydes, phenol, 2-metoxyphenol, and dihydroxybenzene, were not methylated. This Trichoderma longibrachiatum protein is Chlorophenol O-methyltransferase.